The sequence spans 498 residues: Glutamate--tRNA ligase (498 aa).

Positions 10-20 match the 'HIGH' region motif; the sequence is PSPTGYFHIGG. The short motif at 252 to 256 is the 'KMSKS' region element; that stretch reads KLSKR. An ATP-binding site is contributed by Lys-255.

It belongs to the class-I aminoacyl-tRNA synthetase family. Glutamate--tRNA ligase type 1 subfamily. In terms of assembly, monomer.

The protein localises to the cytoplasm. The catalysed reaction is tRNA(Glu) + L-glutamate + ATP = L-glutamyl-tRNA(Glu) + AMP + diphosphate. Its function is as follows. Catalyzes the attachment of glutamate to tRNA(Glu) in a two-step reaction: glutamate is first activated by ATP to form Glu-AMP and then transferred to the acceptor end of tRNA(Glu). In Mycoplasmoides gallisepticum (strain R(low / passage 15 / clone 2)) (Mycoplasma gallisepticum), this protein is Glutamate--tRNA ligase.